We begin with the raw amino-acid sequence, 545 residues long: CTP synthase (545 aa).

The amidoligase domain stretch occupies residues 1-266 (MTTNYIFVTG…DDYICKRFSL (266 aa)). Ser-14 serves as a coordination point for CTP. Ser-14 lines the UTP pocket. Residues 15 to 20 (SLGKGI) and Asp-72 contribute to the ATP site. Mg(2+)-binding residues include Asp-72 and Glu-140. Residues 147–149 (DIE), 187–192 (KTKPTQ), and Lys-223 each bind CTP. UTP is bound by residues 187 to 192 (KTKPTQ) and Lys-223. 239–241 (KDV) is a binding site for ATP. The Glutamine amidotransferase type-1 domain maps to 291–542 (TIGMVGKYIE…VKAASEYQKR (252 aa)). Residue Gly-352 participates in L-glutamine binding. The active-site Nucleophile; for glutamine hydrolysis is Cys-379. L-glutamine contacts are provided by residues 380–383 (LGMQ), Glu-403, and Arg-470. Active-site residues include His-515 and Glu-517.

The protein belongs to the CTP synthase family. Homotetramer.

It catalyses the reaction UTP + L-glutamine + ATP + H2O = CTP + L-glutamate + ADP + phosphate + 2 H(+). The enzyme catalyses L-glutamine + H2O = L-glutamate + NH4(+). The catalysed reaction is UTP + NH4(+) + ATP = CTP + ADP + phosphate + 2 H(+). It functions in the pathway pyrimidine metabolism; CTP biosynthesis via de novo pathway; CTP from UDP: step 2/2. With respect to regulation, allosterically activated by GTP, when glutamine is the substrate; GTP has no effect on the reaction when ammonia is the substrate. The allosteric effector GTP functions by stabilizing the protein conformation that binds the tetrahedral intermediate(s) formed during glutamine hydrolysis. Inhibited by the product CTP, via allosteric rather than competitive inhibition. Its function is as follows. Catalyzes the ATP-dependent amination of UTP to CTP with either L-glutamine or ammonia as the source of nitrogen. Regulates intracellular CTP levels through interactions with the four ribonucleotide triphosphates. The polypeptide is CTP synthase (Cronobacter sakazakii (strain ATCC BAA-894) (Enterobacter sakazakii)).